A 285-amino-acid chain; its full sequence is 4-hydroxybenzoate octaprenyltransferase (285 aa).

The next 7 helical transmembrane spans lie at 33–53, 93–113, 134–154, 166–186, 209–229, 233–253, and 265–285; these read FLAA…LGVV, LILF…MNTL, ITYL…PMAY, WLLF…YAMV, LMIG…GIQL, SLYN…QWLI, and FLNN…SVLI.

The protein belongs to the UbiA prenyltransferase family. Requires Mg(2+) as cofactor.

It is found in the cell inner membrane. It catalyses the reaction all-trans-octaprenyl diphosphate + 4-hydroxybenzoate = 4-hydroxy-3-(all-trans-octaprenyl)benzoate + diphosphate. Its pathway is cofactor biosynthesis; ubiquinone biosynthesis. Catalyzes the prenylation of para-hydroxybenzoate (PHB) with an all-trans polyprenyl group. Mediates the second step in the final reaction sequence of ubiquinone-8 (UQ-8) biosynthesis, which is the condensation of the polyisoprenoid side chain with PHB, generating the first membrane-bound Q intermediate 3-octaprenyl-4-hydroxybenzoate. The sequence is that of 4-hydroxybenzoate octaprenyltransferase from Aliivibrio salmonicida (strain LFI1238) (Vibrio salmonicida (strain LFI1238)).